The following is a 308-amino-acid chain: Pyrroline-5-carboxylate reductase 3 (308 aa).

The protein belongs to the pyrroline-5-carboxylate reductase family. In terms of assembly, homodecamer; composed of 5 homodimers.

It is found in the cytoplasm. The catalysed reaction is L-proline + NADP(+) = (S)-1-pyrroline-5-carboxylate + NADPH + 2 H(+). It catalyses the reaction L-proline + NAD(+) = (S)-1-pyrroline-5-carboxylate + NADH + 2 H(+). Its pathway is amino-acid biosynthesis; L-proline biosynthesis; L-proline from L-glutamate 5-semialdehyde: step 1/1. In terms of biological role, oxidoreductase that catalyzes the last step in proline biosynthesis, which corresponds to the reduction of pyrroline-5-carboxylate (P5C) to L-proline using NAD(P)H. Proline is synthesized from either glutamate or ornithine; both are converted to P5C, and then to proline via pyrroline-5-carboxylate reductases (PYCRs). PYCR3 is exclusively linked to the biosynthesis of proline from ornithine. This chain is Pyrroline-5-carboxylate reductase 3, found in Bos taurus (Bovine).